The chain runs to 190 residues: MDNQAKLSLDLLLGLSIFLTTFLFVANFLPGIFADVRHEIALGSHAYRVAALLVEDPGYPDDWCTAVDTSNCISKEFRPGLAIFDENNGTEYNYLNTSKIFKLQELLSNSACRDTVRNYLGLNSTNFKYKFYFSLKYLNDTEIVSGGDNLPEMGNIIKFDRLVYVDNCTAIPCESIAERCVCKLEVAVWI.

A helical membrane pass occupies residues 12 to 34 (LLGLSIFLTTFLFVANFLPGIFA).

The protein resides in the membrane. This is an uncharacterized protein from Archaeoglobus fulgidus (strain ATCC 49558 / DSM 4304 / JCM 9628 / NBRC 100126 / VC-16).